We begin with the raw amino-acid sequence, 132 residues long: Pro-MCH 1 (132 aa).

The first 24 residues, 1–24 (MRDSVLSVIFALALFLECYTPSMA), serve as a signal peptide directing secretion. Cys-120 and Cys-129 are oxidised to a cystine.

This sequence belongs to the MCH family. In terms of tissue distribution, pituitary gland. Produced in neurons of lateral basal hypothalamus which project both to the brain and to the neural lobe of the pituitary gland from where MCH is released.

In terms of biological role, plays a role in skin pigmentation by antagonizing the action of melanotropin alpha. Induces melanin concentration within the melanophores. May participate in the control of the hypothalamo-pituitary adrenal gland axis by inhibiting the release of ACTH. This chain is Pro-MCH 1 (mch1), found in Oncorhynchus kisutch (Coho salmon).